Here is a 502-residue protein sequence, read N- to C-terminus: Probable glycine dehydrogenase (decarboxylating) subunit 2 (502 aa).

Position 273 is an N6-(pyridoxal phosphate)lysine (Lys273).

It belongs to the GcvP family. C-terminal subunit subfamily. As to quaternary structure, the glycine cleavage system is composed of four proteins: P, T, L and H. In this organism, the P 'protein' is a heterodimer of two subunits. Requires pyridoxal 5'-phosphate as cofactor.

It carries out the reaction N(6)-[(R)-lipoyl]-L-lysyl-[glycine-cleavage complex H protein] + glycine + H(+) = N(6)-[(R)-S(8)-aminomethyldihydrolipoyl]-L-lysyl-[glycine-cleavage complex H protein] + CO2. Functionally, the glycine cleavage system catalyzes the degradation of glycine. The P protein binds the alpha-amino group of glycine through its pyridoxal phosphate cofactor; CO(2) is released and the remaining methylamine moiety is then transferred to the lipoamide cofactor of the H protein. This chain is Probable glycine dehydrogenase (decarboxylating) subunit 2, found in Pyrococcus abyssi (strain GE5 / Orsay).